Reading from the N-terminus, the 557-residue chain is Membrane protein insertase YidC (557 aa).

A helical membrane pass occupies residues 7-27 (ILLVALAVVSYLLVLQWNQDY). Residues 42–77 (ASPALPETVPGDSSTSADVPTAGSGNQVPDSAASTA) form a disordered region. The span at 52–77 (GDSSTSADVPTAGSGNQVPDSAASTA) shows a compositional bias: polar residues. The next 3 membrane-spanning stretches (helical) occupy residues 370–390 (WGWS…PLSA), 436–456 (LGGC…YWVL), and 514–534 (PIIF…YWVV).

Belongs to the OXA1/ALB3/YidC family. Type 1 subfamily. In terms of assembly, interacts with the Sec translocase complex via SecD. Specifically interacts with transmembrane segments of nascent integral membrane proteins during membrane integration.

The protein resides in the cell inner membrane. Required for the insertion and/or proper folding and/or complex formation of integral membrane proteins into the membrane. Involved in integration of membrane proteins that insert both dependently and independently of the Sec translocase complex, as well as at least some lipoproteins. Aids folding of multispanning membrane proteins. In Azotobacter vinelandii (strain DJ / ATCC BAA-1303), this protein is Membrane protein insertase YidC.